A 621-amino-acid polypeptide reads, in one-letter code: Zinc metalloproteinase-disintegrin-like TSV-DM (621 aa).

Positions 1-20 (MIQVLLVTICLAVFPYQGSS) are cleaved as a signal peptide. A propeptide spanning residues 21–191 (IILESGNVND…EASQSNLTPE (171 aa)) is cleaved from the precursor. Gln192 bears the Pyrrolidone carboxylic acid mark. The 197-residue stretch at 200-396 (KYVKFFLVAD…NMPQCILKKP (197 aa)) folds into the Peptidase M12B domain. N-linked (GlcNAc...) asparagine glycosylation occurs at Asn219. Disulfide bonds link Cys311–Cys391, Cys351–Cys375, and Cys353–Cys358. His336 is a Zn(2+) binding site. Glu337 is an active-site residue. His340 and His346 together coordinate Zn(2+). Positions 404–489 (PPVCGNYFVE…AECTDRFQRN (86 aa)) constitute a Disintegrin domain. Ca(2+) is bound by residues Val406, Asn409, Phe411, Glu413, Glu416, and Asp419. Intrachain disulfides connect Cys407–Cys436, Cys418–Cys431, Cys420–Cys426, Cys430–Cys453, Cys444–Cys450, Cys449–Cys475, Cys462–Cys482, Cys469–Cys500, Cys493–Cys505, Cys512–Cys562, Cys527–Cys573, Cys540–Cys550, Cys557–Cys599, and Cys593–Cys605. The D/ECD-tripeptide motif lies at 468–470 (ECD). Asp470, Met471, Asp473, Asp484, and Arg485 together coordinate Ca(2+). N-linked (GlcNAc...) asparagine glycosylation occurs at Asn502.

This sequence belongs to the venom metalloproteinase (M12B) family. P-III subfamily. P-IIIc sub-subfamily. Homodimer; disulfide-linked. Requires Zn(2+) as cofactor. Post-translationally, the N-terminus is blocked. As to expression, expressed by the venom gland.

It is found in the secreted. Its activity is regulated as follows. Inhibited by EDTA and DTT, and partially inhibited by EGTA, but not inhibited by PMSF and NEM. In terms of biological role, snake venom zinc metalloprotease that hydrolyzes the alpha-chain (FGA) and more slowly the beta-chain (FGB) of fibrinogen. Inhibits cell proliferation and induces cell morphologic changes transiently on human umbilical vein endothelial cells. This chain is Zinc metalloproteinase-disintegrin-like TSV-DM, found in Trimeresurus stejnegeri (Chinese green tree viper).